The sequence spans 355 residues: MTEPIRLLIAASGTGGHLFPALALAQQLPDYEIIWLGVPDRLETTLVPRQYPLQTIPVEGFQGRPSLKTIKIGWNLLRSVFTVRKLIKSKKINAVATTGGYIAAPAIVAAKLCNIPVIFHESNFIPGKVTTWLGRWCDTVAIGFRGTAKYLPNCATVWISTPVREQFRQPQSLDLPIPPNRSLIVVAGGSQGAVTVNQQVRSCVPAWVNAGAFIVHLTGKNDPEAATFSHDHYLSLEFFDNMAALLQKADLAISRAGAGTLTELAVTQTPSILIPYPFAAENHQMYNAQVFVDAGAALMFAQKSLTAEQLEQAGLDLLQSPENLATMAKAAGTLADLDSAEQLAAIVRASVEKSR.

UDP-N-acetyl-alpha-D-glucosamine is bound by residues 14 to 16, Asn-123, Arg-164, Ser-190, and Gln-284; that span reads TGG.

The protein belongs to the glycosyltransferase 28 family. MurG subfamily.

It is found in the cell inner membrane. The catalysed reaction is di-trans,octa-cis-undecaprenyl diphospho-N-acetyl-alpha-D-muramoyl-L-alanyl-D-glutamyl-meso-2,6-diaminopimeloyl-D-alanyl-D-alanine + UDP-N-acetyl-alpha-D-glucosamine = di-trans,octa-cis-undecaprenyl diphospho-[N-acetyl-alpha-D-glucosaminyl-(1-&gt;4)]-N-acetyl-alpha-D-muramoyl-L-alanyl-D-glutamyl-meso-2,6-diaminopimeloyl-D-alanyl-D-alanine + UDP + H(+). It functions in the pathway cell wall biogenesis; peptidoglycan biosynthesis. Its function is as follows. Cell wall formation. Catalyzes the transfer of a GlcNAc subunit on undecaprenyl-pyrophosphoryl-MurNAc-pentapeptide (lipid intermediate I) to form undecaprenyl-pyrophosphoryl-MurNAc-(pentapeptide)GlcNAc (lipid intermediate II). The polypeptide is UDP-N-acetylglucosamine--N-acetylmuramyl-(pentapeptide) pyrophosphoryl-undecaprenol N-acetylglucosamine transferase (Synechocystis sp. (strain ATCC 27184 / PCC 6803 / Kazusa)).